Consider the following 964-residue polypeptide: Glycine dehydrogenase (decarboxylating) (964 aa).

Residue Lys-711 is modified to N6-(pyridoxal phosphate)lysine.

This sequence belongs to the GcvP family. In terms of assembly, the glycine cleavage system is composed of four proteins: P, T, L and H. It depends on pyridoxal 5'-phosphate as a cofactor.

It catalyses the reaction N(6)-[(R)-lipoyl]-L-lysyl-[glycine-cleavage complex H protein] + glycine + H(+) = N(6)-[(R)-S(8)-aminomethyldihydrolipoyl]-L-lysyl-[glycine-cleavage complex H protein] + CO2. The glycine cleavage system catalyzes the degradation of glycine. The P protein binds the alpha-amino group of glycine through its pyridoxal phosphate cofactor; CO(2) is released and the remaining methylamine moiety is then transferred to the lipoamide cofactor of the H protein. The chain is Glycine dehydrogenase (decarboxylating) from Prochlorococcus marinus (strain SARG / CCMP1375 / SS120).